The chain runs to 361 residues: RLA class I histocompatibility antigen, alpha chain 19-1 (361 aa).

Positions 1–24 (MGSIPPRTLLLLLAGALTLKDTQA) are cleaved as a signal peptide. Residues 25–114 (GSHSMRYFYT…ALRYYNQSAA (90 aa)) form an alpha-1 region. The Extracellular portion of the chain corresponds to 25–308 (GSHSMRYFYT…EPPAQPTALI (284 aa)). An N-linked (GlcNAc...) asparagine glycan is attached at Asn-110. Residues 115–206 (GSHTFQTMFG…EMGKETLQRA (92 aa)) are alpha-2. 2 disulfides stabilise this stretch: Cys-125-Cys-188 and Cys-227-Cys-283. Residues 207–298 (DPPKAHVTHH…GLPEPLTLTW (92 aa)) form an alpha-3 region. Residues 209-297 (PKAHVTHHPA…EGLPEPLTLT (89 aa)) form the Ig-like C1-type domain. The segment at 299-308 (EPPAQPTALI) is connecting peptide. A helical transmembrane segment spans residues 309–329 (VGIVAGVLGVLLILGAVVAVV). Residues 330-361 (RRKKHSSDGKGGRYTPAAGGHRDQGSDDSLMP) are Cytoplasmic-facing. The segment at 335 to 361 (SSDGKGGRYTPAAGGHRDQGSDDSLMP) is disordered. 2 positions are modified to phosphoserine: Ser-355 and Ser-358.

This sequence belongs to the MHC class I family. In terms of assembly, heterodimer of an alpha chain and a beta chain (beta-2-microglobulin).

It is found in the membrane. Involved in the presentation of foreign antigens to the immune system. The sequence is that of RLA class I histocompatibility antigen, alpha chain 19-1 from Oryctolagus cuniculus (Rabbit).